The following is a 448-amino-acid chain: N-succinylarginine dihydrolase (448 aa).

Substrate-binding positions include 19–28 (GGLSYGNVAS), Asn110, and 137–138 (HR). Glu174 is a catalytic residue. A substrate-binding site is contributed by Arg214. The active site involves His250. Substrate is bound by residues Asp252 and Asn365. The Nucleophile role is filled by Cys371.

Belongs to the succinylarginine dihydrolase family. As to quaternary structure, homodimer.

It catalyses the reaction N(2)-succinyl-L-arginine + 2 H2O + 2 H(+) = N(2)-succinyl-L-ornithine + 2 NH4(+) + CO2. It participates in amino-acid degradation; L-arginine degradation via AST pathway; L-glutamate and succinate from L-arginine: step 2/5. Functionally, catalyzes the hydrolysis of N(2)-succinylarginine into N(2)-succinylornithine, ammonia and CO(2). This chain is N-succinylarginine dihydrolase, found in Ectopseudomonas mendocina (strain ymp) (Pseudomonas mendocina).